The chain runs to 108 residues: MATTDDISVEVAYALPERQSLVRLKVPAGTTARDAIGLSGLLDQYPGIDADTMKIGIFSRPVKADTVLREHDRVEIYRPLIADPKAVRRARAEAGKAMKKGGGDGDTP.

This sequence belongs to the UPF0125 (RnfH) family.

The polypeptide is Protein RnfH (Laribacter hongkongensis (strain HLHK9)).